Reading from the N-terminus, the 210-residue chain is Large ribosomal subunit protein uL4 (210 aa).

Residues Q46–I89 are disordered. Over residues G60–G71 the composition is skewed to basic residues.

It belongs to the universal ribosomal protein uL4 family. As to quaternary structure, part of the 50S ribosomal subunit.

Its function is as follows. One of the primary rRNA binding proteins, this protein initially binds near the 5'-end of the 23S rRNA. It is important during the early stages of 50S assembly. It makes multiple contacts with different domains of the 23S rRNA in the assembled 50S subunit and ribosome. Forms part of the polypeptide exit tunnel. In Prochlorococcus marinus (strain MIT 9215), this protein is Large ribosomal subunit protein uL4.